We begin with the raw amino-acid sequence, 535 residues long: Pyrichalasin C-18 hydroxylase (535 aa).

Residues 42–62 form a helical membrane-spanning segment; that stretch reads LPSGTLIVLAALSLALLVAVL. 2 N-linked (GlcNAc...) asparagine glycosylation sites follow: N139 and N222. C479 serves as a coordination point for heme.

The protein belongs to the cytochrome P450 family. It depends on heme as a cofactor.

It localises to the membrane. Its pathway is mycotoxin biosynthesis. In terms of biological role, cytochrome P450 monooxygenase; part of the gene cluster that mediates the biosynthesis of the mycotoxin pyrichalasin H, a tyrosine-derived cytochalasan that inhibits the growth of rice seedlings, but also inhibits lymphocyte capping and actin polymerization and alters cell morphology. Pyrichalasin H is indicated as the responsible agent for the genus-specific pathogenicity of M.grisea toward crabgrass. The first step in the pathway is catalyzed by the O-methyltransferase pyiA which methylates free tyrosine to generate the precursor O-methyltyrosine. The hybrid PKS-NRPS pyiS, assisted by the enoyl reductase pyiC, are responsible for fusion of the O-methyltyrosine precursor and the polyketide backbone. The polyketide synthase module (PKS) of pyiS is responsible for the synthesis of the polyketide backbone and the downstream nonribosomal peptide synthetase (NRPS) amidates the carboxyl end of the polyketide with the O-methyltyrosine precursor. As the NRPS A-domain demonstrates substrate tolerance, pyiS can also use phenylalanine, tyrosine and even para-chlorophenylalanine as amino acid precursor, which leads to the production of novel cytochalasans, including halogenated cytochalasans. Because pyiS lacks a designated enoylreductase (ER) domain, the required activity is provided the enoyl reductase pyiC. Reduction by the hydrolyase pyiE leads to 1,5-dihydropyrrolone, which is substrate for dehydration and intra-molecular Diels-Alder cyclization by the Diels-Alderase pyiF to yield the required isoindolone-fused macrocycle. The tailoring cytochrome P450 monooxygenases piyD and piyG catalyze the hydroxylation at C-18 and C-7, respectivily, whereas the short-chain dehydrogenase/reductase pyiH reduces the carbonyl at C-21 in preparation for the transfer of an acetyl group by the acetyltransferase pyiB. These 3 reactions whose order is not clear yet, lead to the production of O-methylpyrichalasin J, a deacetylated pyrichalasin H. Finally, pyiB to converts O-methylpyrichalasin J into the final product pyrichalasin H via acetylation of C-21. The sequence is that of Pyrichalasin C-18 hydroxylase from Pyricularia grisea (Crabgrass-specific blast fungus).